Reading from the N-terminus, the 342-residue chain is Platelet-activating factor receptor (342 aa).

Over 1–16 (MEPHDSSHMDSEFRYT) the chain is Extracellular. A helical membrane pass occupies residues 17 to 38 (LFPIVYSIIFVLGVIANGYVLW). The Cytoplasmic portion of the chain corresponds to 39-54 (VFARLYPCKKFNEIKI). The helical transmembrane segment at 55–74 (FMVNLTMADMLFLITLPLWI) threads the bilayer. Over 75–91 (VYYQNQGNWILPKFLCN) the chain is Extracellular. Cysteine 90 and cysteine 173 are joined by a disulfide. A helical transmembrane segment spans residues 92 to 113 (VAGCLFFINTYCSVAFLGVITY). Topologically, residues 114–133 (NRFQAVTRPIKTAQANTRKR) are cytoplasmic. A helical transmembrane segment spans residues 134-155 (GISLSLVIWVAIVGAASYFLIL). At 156–184 (DSTNTVPDSAGSGNVTRCFEHYEKGSVPV) the chain is on the extracellular side. Residue asparagine 169 is glycosylated (N-linked (GlcNAc...) asparagine). The chain crosses the membrane as a helical span at residues 185–205 (LIIHIFIVFSFFLVFLIILFC). Residues 206 to 233 (NLVIIRTLLMQPVQQQRNAEVKRRALWM) are Cytoplasmic-facing. Residues 234-254 (VCTVLAVFIICFVPHHVVQLP) traverse the membrane as a helical segment. Residues 255–276 (WTLAELGFQDSKFHQAINDAHQ) lie on the Extracellular side of the membrane. The chain crosses the membrane as a helical span at residues 277–296 (VTLCLLSTNCVLDPVIYCFL). Topologically, residues 297 to 342 (TKKFRKHLTEKFYSMRSSRKCSRATTDTVTEVVVPFNQIPGNSLKN) are cytoplasmic.

Belongs to the G-protein coupled receptor 1 family. As to quaternary structure, interacts with ARRB1. Expressed in the placenta, lung, left and right heart ventricles, heart atrium, leukocytes and differentiated HL-60 granulocytes.

It is found in the cell membrane. Functionally, receptor for platelet activating factor, a chemotactic phospholipid mediator that possesses potent inflammatory, smooth-muscle contractile and hypotensive activity. Seems to mediate its action via a G protein that activates a phosphatidylinositol-calcium second messenger system. The chain is Platelet-activating factor receptor (PTAFR) from Homo sapiens (Human).